The chain runs to 73 residues: Conotoxin Leo-O2 (73 aa).

The signal sequence occupies residues 1 to 22 (MKLTCVLIIAVLFLTACQLVTA). Residues 23–47 (DYSGDEQQYRAMRLIDAMRNFGDTR) constitute a propeptide that is removed on maturation. Cystine bridges form between C49-C59, C56-C64, and C58-C69.

The protein belongs to the conotoxin O1 superfamily. In terms of tissue distribution, expressed by the venom duct.

It localises to the secreted. The sequence is that of Conotoxin Leo-O2 from Conus leopardus (Leopard cone).